Here is a 689-residue protein sequence, read N- to C-terminus: UvrABC system protein B (689 aa).

The disordered stretch occupies residues 1–26 (MSDASGPLQPDRPEADVPFRVEAPFD). In terms of domain architecture, Helicase ATP-binding spans 40-422 (AGYEQGAQQQ…ERAQSANVVE (383 aa)). 53-60 (GVTGSGKT) is an ATP binding site. The Beta-hairpin signature appears at 106 to 129 (YYNYYQPEAYVEQTDKYIEKDASI). In terms of domain architecture, Helicase C-terminal spans 443-605 (QVEDLMDRID…TTPTTIEKAV (163 aa)). Residues 632–667 (ALLVEDLEARMEDAASNLEFELAADIRDRMRELREA) form the UVR domain. Positions 668-689 (FDLDGGDAPEDPGGVAPETEDW) are disordered.

This sequence belongs to the UvrB family. In terms of assembly, forms a heterotetramer with UvrA during the search for lesions. Interacts with UvrC in an incision complex.

It localises to the cytoplasm. The UvrABC repair system catalyzes the recognition and processing of DNA lesions. A damage recognition complex composed of 2 UvrA and 2 UvrB subunits scans DNA for abnormalities. Upon binding of the UvrA(2)B(2) complex to a putative damaged site, the DNA wraps around one UvrB monomer. DNA wrap is dependent on ATP binding by UvrB and probably causes local melting of the DNA helix, facilitating insertion of UvrB beta-hairpin between the DNA strands. Then UvrB probes one DNA strand for the presence of a lesion. If a lesion is found the UvrA subunits dissociate and the UvrB-DNA preincision complex is formed. This complex is subsequently bound by UvrC and the second UvrB is released. If no lesion is found, the DNA wraps around the other UvrB subunit that will check the other stand for damage. This Halobacterium salinarum (strain ATCC 700922 / JCM 11081 / NRC-1) (Halobacterium halobium) protein is UvrABC system protein B.